Consider the following 347-residue polypeptide: MNPLIFSIITFTMMLGTGIVMTSSHWLTMWIGFEMNMLAIIPILMKKYNPRSMEASTKYFLTQATASMLLMLAVTINLVHSGQWSTTNPLNPAASIILTLAMAMKLGLSPFHFWVPEVTQGVHLPSGLILLTWQKLAPMSVLYQISPMINLDLMFTMSILSIAIGGWGGLNQTQLRKVMAYSSIAHMGWMTAILAYNPTMALLNLTIYIILTTTTFLTFMTNSTTTTLSLSHLWNKEPLITTIILVTMLSLGGLPPLSGFLPKWMIIQELTKNNSIIAPTTMAITALLNLFFYMRLIYSSALTLFPSMNNTVMKWQLNQTKSTALLSPLTILSTMILPLSPMLMLLE.

10 helical membrane passes run 1-21 (MNPL…GIVM), 25-45 (HWLT…PILM), 59-79 (YFLT…INLV), 96-116 (IILT…FWVP), 122-142 (VHLP…MSVL), 148-168 (MINL…GGWG), 200-220 (MALL…LTFM), 240-260 (ITTI…LSGF), 274-294 (NSII…FFYM), and 325-345 (LLSP…MLML).

It belongs to the complex I subunit 2 family. In terms of assembly, core subunit of respiratory chain NADH dehydrogenase (Complex I) which is composed of 45 different subunits. Interacts with TMEM242.

The protein resides in the mitochondrion inner membrane. It catalyses the reaction a ubiquinone + NADH + 5 H(+)(in) = a ubiquinol + NAD(+) + 4 H(+)(out). Functionally, core subunit of the mitochondrial membrane respiratory chain NADH dehydrogenase (Complex I) which catalyzes electron transfer from NADH through the respiratory chain, using ubiquinone as an electron acceptor. Essential for the catalytic activity and assembly of complex I. The sequence is that of NADH-ubiquinone oxidoreductase chain 2 from Thoopterus nigrescens (Swift fruit bat).